The primary structure comprises 64 residues: uncharacterized protein (64 aa).

The helical transmembrane segment at 30 to 52 threads the bilayer; that stretch reads FYAIFEMLFWPLVSLISVGLLGE.

It localises to the membrane. This is an uncharacterized protein from Archaeoglobus fulgidus (strain ATCC 49558 / DSM 4304 / JCM 9628 / NBRC 100126 / VC-16).